We begin with the raw amino-acid sequence, 236 residues long: Small ribosomal subunit protein uS2c (236 aa).

It belongs to the universal ribosomal protein uS2 family.

The protein resides in the plastid. Its subcellular location is the chloroplast. This Ipomoea purpurea (Common morning glory) protein is Small ribosomal subunit protein uS2c (rps2).